A 534-amino-acid chain; its full sequence is uncharacterized protein (534 aa).

This is an uncharacterized protein from Escherichia coli (strain K12).